The chain runs to 361 residues: 3-dehydroquinate synthase (361 aa).

Residues 105-109, 129-130, Lys-142, Lys-151, and 169-172 contribute to the NAD(+) site; these read GVIGD, TT, and FLST. The Zn(2+) site is built by Glu-184, His-247, and His-264.

It belongs to the sugar phosphate cyclases superfamily. Dehydroquinate synthase family. Requires Co(2+) as cofactor. Zn(2+) serves as cofactor. The cofactor is NAD(+).

It is found in the cytoplasm. The catalysed reaction is 7-phospho-2-dehydro-3-deoxy-D-arabino-heptonate = 3-dehydroquinate + phosphate. It functions in the pathway metabolic intermediate biosynthesis; chorismate biosynthesis; chorismate from D-erythrose 4-phosphate and phosphoenolpyruvate: step 2/7. In terms of biological role, catalyzes the conversion of 3-deoxy-D-arabino-heptulosonate 7-phosphate (DAHP) to dehydroquinate (DHQ). This Endomicrobium trichonymphae protein is 3-dehydroquinate synthase.